The primary structure comprises 141 residues: Small ribosomal subunit protein bS18c (141 aa).

Disordered stretches follow at residues 14-55 (EFIA…IKPG) and 120-141 (IKRR…RPKK). Positions 24–34 (PKAPLQPPLPP) are enriched in pro residues. Residues 35 to 51 (SKRKGKPPKSPRRRSSR) are compositionally biased toward basic residues.

The protein belongs to the bacterial ribosomal protein bS18 family. As to quaternary structure, part of the 30S ribosomal subunit.

It is found in the plastid. Its subcellular location is the chloroplast. The sequence is that of Small ribosomal subunit protein bS18c from Pelargonium hortorum (Common geranium).